We begin with the raw amino-acid sequence, 101 residues long: NADH-quinone oxidoreductase subunit K (101 aa).

Transmembrane regions (helical) follow at residues 4 to 24 (LAHYLVLGAILFAISIVGIFL), 30 to 50 (IIILMAIELMLLAVNTNFVAF), and 61 to 81 (IFVFFVLTVAAAEAAIGLAIL).

Belongs to the complex I subunit 4L family. In terms of assembly, NDH-1 is composed of 14 different subunits. Subunits NuoA, H, J, K, L, M, N constitute the membrane sector of the complex.

It localises to the cell inner membrane. It carries out the reaction a quinone + NADH + 5 H(+)(in) = a quinol + NAD(+) + 4 H(+)(out). Functionally, NDH-1 shuttles electrons from NADH, via FMN and iron-sulfur (Fe-S) centers, to quinones in the respiratory chain. The immediate electron acceptor for the enzyme in this species is believed to be ubiquinone. Couples the redox reaction to proton translocation (for every two electrons transferred, four hydrogen ions are translocated across the cytoplasmic membrane), and thus conserves the redox energy in a proton gradient. The chain is NADH-quinone oxidoreductase subunit K from Paraburkholderia phymatum (strain DSM 17167 / CIP 108236 / LMG 21445 / STM815) (Burkholderia phymatum).